We begin with the raw amino-acid sequence, 703 residues long: Elongation factor G (703 aa).

The tr-type G domain maps to 9 to 292 (ERTRNIGIMA…AVVDYLPGPL (284 aa)). Residues 18-25 (AHIDAGKT), 91-95 (DTPGH), and 145-148 (NKMD) contribute to the GTP site.

It belongs to the TRAFAC class translation factor GTPase superfamily. Classic translation factor GTPase family. EF-G/EF-2 subfamily.

The protein localises to the cytoplasm. In terms of biological role, catalyzes the GTP-dependent ribosomal translocation step during translation elongation. During this step, the ribosome changes from the pre-translocational (PRE) to the post-translocational (POST) state as the newly formed A-site-bound peptidyl-tRNA and P-site-bound deacylated tRNA move to the P and E sites, respectively. Catalyzes the coordinated movement of the two tRNA molecules, the mRNA and conformational changes in the ribosome. The sequence is that of Elongation factor G from Leuconostoc mesenteroides subsp. mesenteroides (strain ATCC 8293 / DSM 20343 / BCRC 11652 / CCM 1803 / JCM 6124 / NCDO 523 / NBRC 100496 / NCIMB 8023 / NCTC 12954 / NRRL B-1118 / 37Y).